Consider the following 147-residue polypeptide: uncharacterized protein (147 aa).

2 helical membrane-spanning segments follow: residues 4-26 (YLRVVLPLSLALNSYGVLAFFWG) and 123-145 (YALCVGFFVVLLQLLWGSARAYF).

It is found in the cell membrane. This is an uncharacterized protein from Treponema pallidum (strain Nichols).